We begin with the raw amino-acid sequence, 222 residues long: Putative N-acetylmannosamine-6-phosphate 2-epimerase (222 aa).

Belongs to the NanE family.

The enzyme catalyses an N-acyl-D-glucosamine 6-phosphate = an N-acyl-D-mannosamine 6-phosphate. It participates in amino-sugar metabolism; N-acetylneuraminate degradation; D-fructose 6-phosphate from N-acetylneuraminate: step 3/5. Functionally, converts N-acetylmannosamine-6-phosphate (ManNAc-6-P) to N-acetylglucosamine-6-phosphate (GlcNAc-6-P). The chain is Putative N-acetylmannosamine-6-phosphate 2-epimerase from Staphylococcus aureus (strain Mu3 / ATCC 700698).